The chain runs to 317 residues: Apolipoprotein E (317 aa).

Residues 1 to 18 (MKVLWAALLVTFLAGCQA) form the signal peptide. A run of 8 repeats spans residues 80–101 (TLMD…EQLS), 102–123 (PVAE…ARLG), 124–145 (ADME…AMLG), 146–167 (QSTE…KRLL), 168–189 (RDAD…EGAE), 190–211 (RGVS…VRAA), 212–233 (TVGS…ERLR), and 234–255 (ARME…EQVA). The 8 X 22 AA approximate tandem repeats stretch occupies residues 80–255 (TLMDETMKEL…RLDEVKEQVA (176 aa)). Methionine 143 bears the Methionine sulfoxide mark. A Phosphoserine modification is found at serine 147. Residues 158–168 (HLRKLRKRLLR) form an LDL and other lipoprotein receptors binding region. 162–165 (LRKR) lines the heparin pocket. Positions 210-290 (AATVGSLAGQ…SWFEPLVEDM (81 aa)) are lipid-binding and lipoprotein association. 229 to 236 (GERLRARM) is a binding site for heparin. Residues 266-317 (QQISLQAEAFQARLKSWFEPLVEDMQRQWAGLVEKVQAAVGASTAPVPSDNH) form a homooligomerization region. Residues 278–290 (RLKSWFEPLVEDM) are specificity for association with VLDL.

This sequence belongs to the apolipoprotein A1/A4/E family. Homotetramer. May interact with ABCA1; functionally associated with ABCA1 in the biogenesis of HDLs. May interact with APP/A4 amyloid-beta peptide; the interaction is extremely stable in vitro but its physiological significance is unclear. May interact with MAPT. May interact with MAP2. In the cerebrospinal fluid, interacts with secreted SORL1. Interacts with PMEL; this allows the loading of PMEL luminal fragment on ILVs to induce fibril nucleation. APOE exists as multiple glycosylated and sialylated glycoforms within cells and in plasma. The extent of glycosylation and sialylation are tissue and context specific. In terms of processing, glycated in plasma VLDL. Post-translationally, phosphorylated by FAM20C in the extracellular medium.

Its subcellular location is the secreted. It localises to the extracellular space. The protein localises to the extracellular matrix. It is found in the extracellular vesicle. The protein resides in the endosome. Its subcellular location is the multivesicular body. APOE is an apolipoprotein, a protein associating with lipid particles, that mainly functions in lipoprotein-mediated lipid transport between organs via the plasma and interstitial fluids. APOE is a core component of plasma lipoproteins and is involved in their production, conversion and clearance. Apolipoproteins are amphipathic molecules that interact both with lipids of the lipoprotein particle core and the aqueous environment of the plasma. As such, APOE associates with chylomicrons, chylomicron remnants, very low density lipoproteins (VLDL) and intermediate density lipoproteins (IDL) but shows a preferential binding to high-density lipoproteins (HDL). It also binds a wide range of cellular receptors including the LDL receptor/LDLR, the LDL receptor-related proteins LRP1, LRP2 and LRP8 and the very low-density lipoprotein receptor/VLDLR that mediate the cellular uptake of the APOE-containing lipoprotein particles. Finally, APOE also has a heparin-binding activity and binds heparan-sulfate proteoglycans on the surface of cells, a property that supports the capture and the receptor-mediated uptake of APOE-containing lipoproteins by cells. A main function of APOE is to mediate lipoprotein clearance through the uptake of chylomicrons, VLDLs, and HDLs by hepatocytes. APOE is also involved in the biosynthesis by the liver of VLDLs as well as their uptake by peripheral tissues ensuring the delivery of triglycerides and energy storage in muscle, heart and adipose tissues. By participating in the lipoprotein-mediated distribution of lipids among tissues, APOE plays a critical role in plasma and tissues lipid homeostasis. APOE is also involved in two steps of reverse cholesterol transport, the HDLs-mediated transport of cholesterol from peripheral tissues to the liver, and thereby plays an important role in cholesterol homeostasis. First, it is functionally associated with ABCA1 in the biogenesis of HDLs in tissues. Second, it is enriched in circulating HDLs and mediates their uptake by hepatocytes. APOE also plays an important role in lipid transport in the central nervous system, regulating neuron survival and sprouting. The protein is Apolipoprotein E (APOE) of Colobus guereza (Mantled guereza).